The sequence spans 144 residues: Elicitor-responsive protein 3 (144 aa).

Residues 1-103 form the C2 domain; that stretch reads MVQGTLEVLL…YTEGSIPPTV (103 aa). 5 residues coordinate Ca(2+): aspartate 20, aspartate 26, aspartate 73, aspartate 75, and aspartate 81. The interval 123–144 is disordered; that stretch reads TPEDDRDRGLSEEDIGGWKQSS.

The cofactor is Ca(2+).

The polypeptide is Elicitor-responsive protein 3 (ERG3) (Oryza sativa subsp. indica (Rice)).